The following is an 84-amino-acid chain: Kappa-scoloptoxin(11)-Ssm3a (84 aa).

The N-terminal stretch at 1-16 (MSWMFYSFIVFTLAIK) is a signal peptide.

The protein belongs to the scoloptoxin-11 family. In terms of processing, contains 2 disulfide bonds. As to expression, expressed by the venom gland.

The protein resides in the secreted. Functionally, inhibits voltage-gated potassium channel currents in DRG neurons. 200 nM of the toxin inhibits current amplitude by only 25% and even at concentrations up to 5 uM, the toxin does not inhibit all potassium currents. In vivo, insects injected with this toxin showed signs of neurotoxicity including twitching, paralysis, and body contraction. This Scolopendra mutilans (Chinese red-headed centipede) protein is Kappa-scoloptoxin(11)-Ssm3a.